The sequence spans 874 residues: Pyruvate, phosphate dikinase (874 aa).

Residues alanine 2–lysine 340 form an N-terminal region. Arginine 92 lines the ATP pocket. The linker 1 stretch occupies residues lysine 340–serine 399. The central stretch occupies residues proline 400–leucine 498. Threonine 453 carries the post-translational modification Phosphothreonine; by PDRP1. Histidine 455 serves as the catalytic Tele-phosphohistidine intermediate. The linker 2 stretch occupies residues aspartate 499 to threonine 533. Positions leucine 534–lysine 874 are C-terminal. The substrate site is built by arginine 561, arginine 617, glutamate 745, glycine 766, threonine 767, asparagine 768, and aspartate 769. Glutamate 745 provides a ligand contact to Mg(2+). Residue aspartate 769 participates in Mg(2+) binding. Catalysis depends on cysteine 831, which acts as the Proton donor.

Belongs to the PEP-utilizing enzyme family. As to quaternary structure, homodimer. It depends on Mg(2+) as a cofactor. Post-translationally, phosphorylation of Thr-453 in the dark inactivates the enzyme. Dephosphorylation upon light stimulation reactivates the enzyme.

It catalyses the reaction pyruvate + phosphate + ATP = phosphoenolpyruvate + AMP + diphosphate + H(+). Its activity is regulated as follows. Activated by light-induced dephosphorylation. Inhibited by dark-induced phosphorylation. Both reactions are catalyzed by PDRP1. Its function is as follows. Catalyzes the reversible phosphorylation of pyruvate and phosphate. In E.histolytica and C.symbiosus, PPDK functions in the direction of ATP synthesis. The sequence is that of Pyruvate, phosphate dikinase (ppdK) from Clostridium symbiosum (Bacteroides symbiosus).